The chain runs to 264 residues: Thymidylate synthase (264 aa).

DUMP is bound at residue R21. H51 lines the (6R)-5,10-methylene-5,6,7,8-tetrahydrofolate pocket. R126–R127 contacts dUMP. Residue C146 is the Nucleophile of the active site. DUMP-binding positions include R166–D169, N177, and H207–Y209. D169 contributes to the (6R)-5,10-methylene-5,6,7,8-tetrahydrofolate binding site. Position 263 (A263) interacts with (6R)-5,10-methylene-5,6,7,8-tetrahydrofolate.

It belongs to the thymidylate synthase family. Bacterial-type ThyA subfamily. As to quaternary structure, homodimer.

The protein resides in the cytoplasm. The enzyme catalyses dUMP + (6R)-5,10-methylene-5,6,7,8-tetrahydrofolate = 7,8-dihydrofolate + dTMP. Its pathway is pyrimidine metabolism; dTTP biosynthesis. In terms of biological role, catalyzes the reductive methylation of 2'-deoxyuridine-5'-monophosphate (dUMP) to 2'-deoxythymidine-5'-monophosphate (dTMP) while utilizing 5,10-methylenetetrahydrofolate (mTHF) as the methyl donor and reductant in the reaction, yielding dihydrofolate (DHF) as a by-product. This enzymatic reaction provides an intracellular de novo source of dTMP, an essential precursor for DNA biosynthesis. This is Thymidylate synthase from Bacteroides fragilis (strain ATCC 25285 / DSM 2151 / CCUG 4856 / JCM 11019 / LMG 10263 / NCTC 9343 / Onslow / VPI 2553 / EN-2).